An 897-amino-acid chain; its full sequence is Probable basic-leucine zipper transcription factor R (897 aa).

Disordered stretches follow at residues 38–88 (DDNI…NIET) and 128–198 (YQQR…NSNS). Positions 44-75 (NNNNNNNNNNNNNNNNNNNNNNNNNNNNNNNN) are enriched in low complexity. Residues 76-88 (IGSPQIMNENIET) show a composition bias toward polar residues. Positions 94-137 (QYLERLQSIQQQQHQCQTQIQQQLQNYQQQYEDQYQQRQQQYQD) form a coiled coil. Over residues 128–140 (YQQRQQQYQDQYQ) the composition is skewed to low complexity. Residues 141–157 (KPYSSPPLNFNSIPPIT) are compositionally biased toward polar residues. The segment covering 158 to 198 (NNNNNNNNNNNNNNNNNNSNSNSNSNSNSNSNSNSNSNSNS) has biased composition (low complexity). Coiled coils occupy residues 228 to 258 (LQQQQQQQQQQQQQQQQQQQQQQQQQQQQQQ) and 330 to 407 (QQLQ…QQQQ). Residues 461-516 (LQLPTPFYSPQQQQQQHTPISSFIPPPSLPSSPPSPPSPPSPPPQQQQQQQQQQQQ) form a disordered region. Residues 484–505 (IPPPSLPSSPPSPPSPPSPPPQ) are compositionally biased toward pro residues. A compositionally biased stretch (low complexity) spans 506-516 (QQQQQQQQQQQ). A bZIP domain is found at 557-620 (ESKESIKKYN…SIEMMRMEPE (64 aa)). The basic motif stretch occupies residues 559–564 (KESIKK). The segment at 569 to 576 (IASRNYRL) is leucine-zipper.

The protein belongs to the bZIP family.

The protein localises to the nucleus. Functionally, probable transcriptional regulator. This Dictyostelium discoideum (Social amoeba) protein is Probable basic-leucine zipper transcription factor R (bzpR).